Consider the following 318-residue polypeptide: MRPVEVLGKRWAHPIACASGALAAHRPGMENAVLRGAAAIFTKTVTESPREGHPGPVFVDYLDEGYALNAMGLPNPGPDRMVVEIEEFRDEFDVPVYASVAADGPEGFKRLARAFSGVADGLELNVSCPHAGKGYGAELGSDPEAVAEITEAAVRAFDGPVSVKLTPNVDRETLLEVAAAAIDAGAEALTAVNTLGPGLRIDLRTASPVLGAGVGGLSGPALKPIALRVVADLALEFGEEVEIIGVGGIRNGEDVVEFLFAGAKAVQVATAAREKDFGDIAMETSHILKELGYDGPEEAIGAALPEYRERLRRLGWCQ.

Residues Ser-19 and 43–44 (KT) contribute to the FMN site. Residues Lys-43, 69 to 73 (NAMGL), and Asn-125 contribute to the substrate site. Asn-125 contacts FMN. Cys-128 (nucleophile) is an active-site residue. The FMN site is built by Lys-164 and Val-192. Residue 193-194 (NT) participates in substrate binding. FMN contacts are provided by residues Gly-219, 247-248 (GG), and 269-270 (AT).

The protein belongs to the dihydroorotate dehydrogenase family. Type 1 subfamily. As to quaternary structure, heterotetramer of 2 PyrK and 2 PyrD type B subunits. FMN is required as a cofactor.

The protein resides in the cytoplasm. The catalysed reaction is (S)-dihydroorotate + NAD(+) = orotate + NADH + H(+). The protein operates within pyrimidine metabolism; UMP biosynthesis via de novo pathway; orotate from (S)-dihydroorotate (NAD(+) route): step 1/1. Catalyzes the conversion of dihydroorotate to orotate with NAD(+) as electron acceptor. In Methanopyrus kandleri (strain AV19 / DSM 6324 / JCM 9639 / NBRC 100938), this protein is Dihydroorotate dehydrogenase B (NAD(+)), catalytic subunit (pyrD).